The primary structure comprises 298 residues: Ribose-phosphate pyrophosphokinase (298 aa).

ATP is bound by residues 33–35 and 91–92; these read DGE and RQ. Residues His-125 and Asp-164 each coordinate Mg(2+). Lys-187 is an active-site residue. Arg-189 and Asp-224 together coordinate D-ribose 5-phosphate.

It belongs to the ribose-phosphate pyrophosphokinase family. Class III (archaeal) subfamily. Mg(2+) is required as a cofactor.

It localises to the cytoplasm. It carries out the reaction D-ribose 5-phosphate + ATP = 5-phospho-alpha-D-ribose 1-diphosphate + AMP + H(+). It participates in metabolic intermediate biosynthesis; 5-phospho-alpha-D-ribose 1-diphosphate biosynthesis; 5-phospho-alpha-D-ribose 1-diphosphate from D-ribose 5-phosphate (route I): step 1/1. Its function is as follows. Involved in the biosynthesis of the central metabolite phospho-alpha-D-ribosyl-1-pyrophosphate (PRPP) via the transfer of pyrophosphoryl group from ATP to 1-hydroxyl of ribose-5-phosphate (Rib-5-P). This Methanobrevibacter smithii (strain ATCC 35061 / DSM 861 / OCM 144 / PS) protein is Ribose-phosphate pyrophosphokinase.